A 1076-amino-acid chain; its full sequence is Histone deacetylase 4 (1076 aa).

Positions 66–169 (REQQLQQELL…GKESAVASTE (104 aa)) form a coiled coil. Positions 117-312 (MLAMKHQQEL…NSSSGNVSTE (196 aa)) are interaction with MEF2A. The segment covering 132–162 (KLERHRQEQELEKQHREQKLQQLKNKEKGKE) has biased composition (basic and acidic residues). 3 disordered regions span residues 132 to 166 (KLER…SAVA), 205 to 225 (TQHS…ASYN), and 239 to 323 (PLRK…PSAP). Polar residues predominate over residues 205 to 224 (TQHSSLDQSSPPQSGVSASY). The residue at position 209 (serine 209) is a Phosphoserine. Residue serine 245 is modified to Phosphoserine; by CaMK4 and SIK1. The span at 258 to 273 (KVAERRSSPLLRRKDG) shows a compositional bias: basic and acidic residues. Low complexity predominate over residues 289–310 (SACSSAPGSGPSSPNSSSGNVS). Positions 348 to 353 (PSLPNI) match the PxLPxI/L motif; mediates interaction with ANKRA2 and 14-3-3 proteins motif. Serine 349 carries the post-translational modification Phosphoserine. At serine 465 the chain carries Phosphoserine; by CaMK4 and SIK1. Disordered stretches follow at residues 506–529 (ISKP…ELRE), 541–580 (RLPG…QRPA), and 622–645 (RPLS…EPPT). Positions 514-529 (RQPESHPEETEEELRE) are enriched in basic and acidic residues. Lysine 556 is covalently cross-linked (Glycyl lysine isopeptide (Lys-Gly) (interchain with G-Cter in SUMO)). Residue serine 562 is modified to Phosphoserine. Over residues 626–638 (RAQSSPASATFPM) the composition is skewed to polar residues. Serine 629 is subject to Phosphoserine; by CaMK4. At serine 630 the chain carries Phosphoserine. Residues 652 to 1076 (GLVYDTLMLK…EEPMEEEPPL (425 aa)) are histone deacetylase. 4 residues coordinate Zn(2+): cysteine 664, cysteine 666, histidine 672, and cysteine 743. Histidine 795 is an active-site residue. The short motif at 1043 to 1076 (EEAETVTAMASLSVGVKPAEKRSEEEPMEEEPPL) is the Nuclear export signal element.

This sequence belongs to the histone deacetylase family. HD type 2 subfamily. In terms of assembly, homodimer. Homodimerization via its N-terminal domain. Interacts with HDAC7. Interacts with MEF2A, MEF2C, MEF2D, MORC2 and NR2C1. Interacts with a 14-3-3 chaperone proteins in a phosphorylation dependent manner. Interacts with 14-3-3 protein YWHAB. Interacts with BTBD14B. Interacts with KDM5B. Interacts (via PxLPxI/L motif) with ANKRA2 (via ankyrin repeats). Interacts with CUL7 (as part of the 3M complex); negatively regulated by ANKRA2. Interacts with EP300 in the presence of TFAP2C. Interacts with AHRR. Interacts with MYOCD. Interacts with HSPA1A and HSPA1B leading to their deacetylation at 'Lys-77'. Interacts with ZBTB7B; the interaction allows the recruitment of HDAC4 on CD8 loci for deacetylation and possible inhibition of CD8 genes expression. Interacts with DHX36. Interacts with SIK3; this interaction leads to HDAC4 retention in the cytoplasm. Interacts with ZNF638. In terms of processing, phosphorylated by CaMK4 at Ser-245, Ser-465 and Ser-629. Phosphorylation at other residues by CaMK2D is required for the interaction with 14-3-3. Phosphorylation at Ser-349, within the PxLPxI/L motif, impairs the binding of ANKRA2 but generates a high-affinity docking site for 14-3-3. Post-translationally, sumoylation on Lys-556 is promoted by the E3 SUMO-protein ligase RANBP2, and prevented by phosphorylation by CaMK4.

The protein localises to the nucleus. The protein resides in the cytoplasm. The catalysed reaction is N(6)-acetyl-L-lysyl-[histone] + H2O = L-lysyl-[histone] + acetate. Functionally, responsible for the deacetylation of lysine residues on the N-terminal part of the core histones (H2A, H2B, H3 and H4). Histone deacetylation gives a tag for epigenetic repression and plays an important role in transcriptional regulation, cell cycle progression and developmental events. Histone deacetylases act via the formation of large multiprotein complexes. Involved in muscle maturation via its interaction with the myocyte enhancer factors such as MEF2A, MEF2C and MEF2D. Deacetylates HSPA1A and HSPA1A at 'Lys-77' leading to their preferential binding to co-chaperone STUB1. The polypeptide is Histone deacetylase 4 (Hdac4) (Mus musculus (Mouse)).